The sequence spans 232 residues: 2,3,4,5-tetrahydropyridine-2,6-dicarboxylate N-acetyltransferase (232 aa).

This sequence belongs to the transferase hexapeptide repeat family. DapH subfamily.

The catalysed reaction is (S)-2,3,4,5-tetrahydrodipicolinate + acetyl-CoA + H2O = L-2-acetamido-6-oxoheptanedioate + CoA. Its pathway is amino-acid biosynthesis; L-lysine biosynthesis via DAP pathway; LL-2,6-diaminopimelate from (S)-tetrahydrodipicolinate (acetylase route): step 1/3. Its function is as follows. Catalyzes the transfer of an acetyl group from acetyl-CoA to tetrahydrodipicolinate. The sequence is that of 2,3,4,5-tetrahydropyridine-2,6-dicarboxylate N-acetyltransferase from Streptococcus thermophilus (strain CNRZ 1066).